The primary structure comprises 203 residues: Histidine biosynthesis bifunctional protein HisIE (203 aa).

The interval 1-114 is phosphoribosyl-AMP cyclohydrolase; that stretch reads MLTEQQRREL…FGDASHQWLF (114 aa). The tract at residues 115-203 is phosphoribosyl-ATP pyrophosphohydrolase; it reads LYQLEQLLAE…VIDNLRKRHQ (89 aa).

It in the N-terminal section; belongs to the PRA-CH family. The protein in the C-terminal section; belongs to the PRA-PH family.

The protein localises to the cytoplasm. It catalyses the reaction 1-(5-phospho-beta-D-ribosyl)-ATP + H2O = 1-(5-phospho-beta-D-ribosyl)-5'-AMP + diphosphate + H(+). The enzyme catalyses 1-(5-phospho-beta-D-ribosyl)-5'-AMP + H2O = 1-(5-phospho-beta-D-ribosyl)-5-[(5-phospho-beta-D-ribosylamino)methylideneamino]imidazole-4-carboxamide. It participates in amino-acid biosynthesis; L-histidine biosynthesis; L-histidine from 5-phospho-alpha-D-ribose 1-diphosphate: step 2/9. Its pathway is amino-acid biosynthesis; L-histidine biosynthesis; L-histidine from 5-phospho-alpha-D-ribose 1-diphosphate: step 3/9. The sequence is that of Histidine biosynthesis bifunctional protein HisIE (hisI) from Salmonella typhimurium (strain LT2 / SGSC1412 / ATCC 700720).